The primary structure comprises 309 residues: Pyridoxal 5'-phosphate synthase subunit PDX1.1 (309 aa).

The residue at position 1 (Met-1) is an N-acetylmethionine. Asp-41 provides a ligand contact to D-ribose 5-phosphate. The Schiff-base intermediate with D-ribose 5-phosphate role is filled by Lys-98. Residue Gly-170 participates in D-ribose 5-phosphate binding. D-glyceraldehyde 3-phosphate is bound at residue Arg-182. D-ribose 5-phosphate-binding positions include Gly-231 and 252-253; that span reads GS.

Belongs to the PdxS/SNZ family. As to quaternary structure, homodimer or heterodimer with PDX1.2 or PDX1.3. Interacts with PDX2. Expressed in flowers, shoots, leaves and weakly in roots.

It is found in the cytoplasm. It catalyses the reaction aldehydo-D-ribose 5-phosphate + D-glyceraldehyde 3-phosphate + L-glutamine = pyridoxal 5'-phosphate + L-glutamate + phosphate + 3 H2O + H(+). It functions in the pathway cofactor biosynthesis; pyridoxal 5'-phosphate biosynthesis. Functionally, catalyzes the formation of pyridoxal 5'-phosphate from ribose 5-phosphate (RBP), glyceraldehyde 3-phosphate (G3P) and ammonia. The ammonia is provided by PDX2. Can also use ribulose 5-phosphate and dihydroxyacetone phosphate as substrates, resulting from enzyme-catalyzed isomerization of RBP and G3P, respectively. Also plays an indirect role in resistance to singlet oxygen-generating photosensitizers. This chain is Pyridoxal 5'-phosphate synthase subunit PDX1.1 (PDX11), found in Arabidopsis thaliana (Mouse-ear cress).